A 321-amino-acid polypeptide reads, in one-letter code: Lipoyl synthase (321 aa).

The [4Fe-4S] cluster site is built by cysteine 68, cysteine 73, cysteine 79, cysteine 94, cysteine 98, cysteine 101, and serine 308. Positions 80–297 (FNHGTATFMI…KEVALELGFT (218 aa)) constitute a Radical SAM core domain.

This sequence belongs to the radical SAM superfamily. Lipoyl synthase family. The cofactor is [4Fe-4S] cluster.

Its subcellular location is the cytoplasm. It catalyses the reaction [[Fe-S] cluster scaffold protein carrying a second [4Fe-4S](2+) cluster] + N(6)-octanoyl-L-lysyl-[protein] + 2 oxidized [2Fe-2S]-[ferredoxin] + 2 S-adenosyl-L-methionine + 4 H(+) = [[Fe-S] cluster scaffold protein] + N(6)-[(R)-dihydrolipoyl]-L-lysyl-[protein] + 4 Fe(3+) + 2 hydrogen sulfide + 2 5'-deoxyadenosine + 2 L-methionine + 2 reduced [2Fe-2S]-[ferredoxin]. It functions in the pathway protein modification; protein lipoylation via endogenous pathway; protein N(6)-(lipoyl)lysine from octanoyl-[acyl-carrier-protein]: step 2/2. Catalyzes the radical-mediated insertion of two sulfur atoms into the C-6 and C-8 positions of the octanoyl moiety bound to the lipoyl domains of lipoate-dependent enzymes, thereby converting the octanoylated domains into lipoylated derivatives. The chain is Lipoyl synthase from Vibrio cholerae serotype O1 (strain ATCC 39315 / El Tor Inaba N16961).